Reading from the N-terminus, the 97-residue chain is MARSISNVKIVSAFVSRELSNAIFRRGYAATAAQGSVSSGGRSGAVASAVMKKKGVEESTQKISWVPDPKTGYYRPETGSNEIDAAELRAALLNNKQ.

Residues 1–46 (MARSISNVKIVSAFVSRELSNAIFRRGYAATAAQGSVSSGGRSGAV) constitute a mitochondrion transit peptide.

This sequence belongs to the LEA type 3 family. As to expression, expressed in roots, stems leaves and flowers, but not in seeds. In short days, observed in cotyledons and roots but absent from rosette leaves.

It localises to the mitochondrion. Its function is as follows. Mediates tolerance to oxidative stresses (e.g. hydrogen peroxide H(2)O(2), diamide, menadione and tert-butyl hydroperoxide) by minimizing the negative effects of oxidation and monitoring photosynthesis during stress. Promotes root development. Prevents premature aging (e.g. senescence and flowering). Involved in resistance against compatible pathogens such as Botrytis cinerea and Pseudomonas syringae pv. tomato. This Arabidopsis thaliana (Mouse-ear cress) protein is Protein SENESCENCE-ASSOCIATED GENE 21, mitochondrial.